A 533-amino-acid chain; its full sequence is AAA-ATPase At5g17740 (533 aa).

A helical transmembrane segment spans residues 11-27; sequence ASMFSTYASMMGYVMII. 252-259 is an ATP binding site; it reads GPPGTGKS.

It belongs to the AAA ATPase family. BCS1 subfamily. It depends on Mg(2+) as a cofactor.

It localises to the membrane. It catalyses the reaction ATP + H2O = ADP + phosphate + H(+). This chain is AAA-ATPase At5g17740, found in Arabidopsis thaliana (Mouse-ear cress).